Reading from the N-terminus, the 198-residue chain is Small ribosomal subunit protein uS7 (198 aa).

This sequence belongs to the universal ribosomal protein uS7 family. In terms of assembly, part of the 30S ribosomal subunit.

In terms of biological role, one of the primary rRNA binding proteins, it binds directly to 16S rRNA where it nucleates assembly of the head domain of the 30S subunit. Is located at the subunit interface close to the decoding center. The polypeptide is Small ribosomal subunit protein uS7 (Desulfurococcus amylolyticus (strain DSM 18924 / JCM 16383 / VKM B-2413 / 1221n) (Desulfurococcus kamchatkensis)).